The sequence spans 427 residues: Light-independent protochlorophyllide reductase subunit N (427 aa).

[4Fe-4S] cluster contacts are provided by Cys32, Cys57, and Cys118.

This sequence belongs to the BchN/ChlN family. As to quaternary structure, protochlorophyllide reductase is composed of three subunits; BchL, BchN and BchB. Forms a heterotetramer of two BchB and two BchN subunits. The cofactor is [4Fe-4S] cluster.

It catalyses the reaction chlorophyllide a + oxidized 2[4Fe-4S]-[ferredoxin] + 2 ADP + 2 phosphate = protochlorophyllide a + reduced 2[4Fe-4S]-[ferredoxin] + 2 ATP + 2 H2O. It functions in the pathway porphyrin-containing compound metabolism; bacteriochlorophyll biosynthesis (light-independent). Functionally, component of the dark-operative protochlorophyllide reductase (DPOR) that uses Mg-ATP and reduced ferredoxin to reduce ring D of protochlorophyllide (Pchlide) to form chlorophyllide a (Chlide). This reaction is light-independent. The NB-protein (BchN-BchB) is the catalytic component of the complex. The sequence is that of Light-independent protochlorophyllide reductase subunit N from Rubrivivax gelatinosus (strain NBRC 100245 / IL144).